A 138-amino-acid chain; its full sequence is Histone H3 (138 aa).

The disordered stretch occupies residues 1–49; that stretch reads MARTKQTARKSTGGKAPRKQLATKAARKQAPSQVSGGVKKPHRYRPGTV. An N6,N6,N6-trimethyllysine; alternate modification is found at Lys-5. Lys-5 bears the N6,N6-dimethyllysine; alternate mark. N6-methyllysine; alternate is present on residues Lys-5 and Lys-10. Lys-10 carries the N6-acetyllysine; alternate modification. Phosphoserine is present on Ser-11. N6,N6-dimethyllysine; alternate is present on Lys-15. Lys-15, Lys-19, Lys-24, Lys-28, and Lys-39 each carry N6-methyllysine; alternate. 5 positions are modified to N6-acetyllysine; alternate: Lys-15, Lys-19, Lys-24, Lys-28, and Lys-39. Residues Lys-28 and Lys-39 each carry the N6,N6,N6-trimethyllysine; alternate modification. An N6,N6-dimethyllysine; alternate mark is found at Lys-28 and Lys-39. Residues Lys-59 and Lys-67 each carry the N6-acetyllysine modification. Lys-82 is subject to N6,N6,N6-trimethyllysine; alternate. Residue Lys-82 is modified to N6,N6-dimethyllysine; alternate. Lys-82 carries the N6-methyllysine; alternate modification.

This sequence belongs to the histone H3 family. The nucleosome is a histone octamer containing two molecules each of H2A, H2B, H3 and H4 assembled in one H3-H4 heterotetramer and two H2A-H2B heterodimers. The octamer wraps approximately 147 bp of DNA. Post-translationally, phosphorylated to form H3S10ph. H3S10ph promotes subsequent H3K14ac formation and is required for transcriptional activation through TBP recruitment to the promoters. Mono-, di- and trimethylated by the COMPASS complex to form H3K4me1/2/3. H3K4me activates gene expression by regulating transcription elongation and plays a role in telomere length maintenance. H3K4me enrichment correlates with transcription levels, and occurs in a 5' to 3' gradient with H3K4me3 enrichment at the 5'-end of genes, shifting to H3K4me2 and then H3K4me1. Methylated by SET2 to form H3K36me. H3K36me represses gene expression. Methylated by DOT1 to form H3K79me. H3K79me is required for association of SIR proteins with telomeric regions and for telomeric silencing. The COMPASS-mediated formation of H3K4me2/3 and the DOT1-mediated formation of H3K79me require H2BK123ub1. In terms of processing, acetylation of histone H3 leads to transcriptional activation. H3K14ac formation by GCN5 is promoted by H3S10ph. H3K14ac can also be formed by ESA1. H3K56ac formation occurs predominantly in newly synthesized H3 molecules during G1, S and G2/M of the cell cycle and may be involved in DNA repair.

Its subcellular location is the nucleus. The protein resides in the chromosome. Functionally, core component of nucleosome. Nucleosomes wrap and compact DNA into chromatin, limiting DNA accessibility to the cellular machineries which require DNA as a template. Histones thereby play a central role in transcription regulation, DNA repair, DNA replication and chromosomal stability. DNA accessibility is regulated via a complex set of post-translational modifications of histones, also called histone code, and nucleosome remodeling. The protein is Histone H3 (HHT1) of Cryptococcus neoformans var. neoformans serotype D (strain B-3501A) (Filobasidiella neoformans).